The following is a 396-amino-acid chain: UPF0164 protein TP_0858 (396 aa).

An N-terminal signal peptide occupies residues 1–28; the sequence is MGTMIRHTFTHRCGALLCALALGSSTMA.

This sequence belongs to the UPF0164 family.

The polypeptide is UPF0164 protein TP_0858 (Treponema pallidum (strain Nichols)).